Here is a 127-residue protein sequence, read N- to C-terminus: Fluoride-specific ion channel FluC (127 aa).

4 helical membrane passes run 1–21 (MPQG…GACL), 39–59 (FGTL…YGVI), 72–92 (LIGV…VETL), and 105–125 (ANVF…IELM). 2 residues coordinate Na(+): Gly79 and Thr82.

This sequence belongs to the fluoride channel Fluc/FEX (TC 1.A.43) family.

The protein localises to the cell inner membrane. It carries out the reaction fluoride(in) = fluoride(out). Its activity is regulated as follows. Na(+) is not transported, but it plays an essential structural role and its presence is essential for fluoride channel function. Fluoride-specific ion channel. Important for reducing fluoride concentration in the cell, thus reducing its toxicity. The chain is Fluoride-specific ion channel FluC from Alteromonas mediterranea (strain DSM 17117 / CIP 110805 / LMG 28347 / Deep ecotype).